The primary structure comprises 467 residues: Asparagine--tRNA ligase (467 aa).

The protein belongs to the class-II aminoacyl-tRNA synthetase family. In terms of assembly, homodimer.

It localises to the cytoplasm. The catalysed reaction is tRNA(Asn) + L-asparagine + ATP = L-asparaginyl-tRNA(Asn) + AMP + diphosphate + H(+). The sequence is that of Asparagine--tRNA ligase from Actinobacillus succinogenes (strain ATCC 55618 / DSM 22257 / CCUG 43843 / 130Z).